The following is a 463-amino-acid chain: tRNA-2-methylthio-N(6)-dimethylallyladenosine synthase (463 aa).

In terms of domain architecture, MTTase N-terminal spans 18-136; it reads RKLYIETYGC…LPNLVGAAEQ (119 aa). [4Fe-4S] cluster-binding residues include C27, C63, C100, C174, C178, and C181. In terms of domain architecture, Radical SAM core spans 160-392; sequence GGVHINGFVS…IALQNRLSEE (233 aa). The region spanning 395–458 is the TRAM domain; it reads KRDIGKTFEV…SATLFGEVVE (64 aa).

Belongs to the methylthiotransferase family. MiaB subfamily. In terms of assembly, monomer. Requires [4Fe-4S] cluster as cofactor.

It is found in the cytoplasm. The catalysed reaction is N(6)-dimethylallyladenosine(37) in tRNA + (sulfur carrier)-SH + AH2 + 2 S-adenosyl-L-methionine = 2-methylsulfanyl-N(6)-dimethylallyladenosine(37) in tRNA + (sulfur carrier)-H + 5'-deoxyadenosine + L-methionine + A + S-adenosyl-L-homocysteine + 2 H(+). Functionally, catalyzes the methylthiolation of N6-(dimethylallyl)adenosine (i(6)A), leading to the formation of 2-methylthio-N6-(dimethylallyl)adenosine (ms(2)i(6)A) at position 37 in tRNAs that read codons beginning with uridine. This is tRNA-2-methylthio-N(6)-dimethylallyladenosine synthase from Porphyromonas gingivalis (strain ATCC BAA-308 / W83).